The following is a 123-amino-acid chain: MAKLTKETFVESLKEMSIKEVMELVEAMKEEFGVDPAAAVAVAAAPGEAAEAAKTSVKVVLKADNGKKVQIIKAVKDLLGGSLMDAKKIVDNLPAVVKENIKPEEAEPIRAALVEAGAEVSVE.

The protein belongs to the bacterial ribosomal protein bL12 family. As to quaternary structure, homodimer. Part of the ribosomal stalk of the 50S ribosomal subunit. Forms a multimeric L10(L12)X complex, where L10 forms an elongated spine to which 2 to 4 L12 dimers bind in a sequential fashion. Binds GTP-bound translation factors.

Forms part of the ribosomal stalk which helps the ribosome interact with GTP-bound translation factors. Is thus essential for accurate translation. This chain is Large ribosomal subunit protein bL12, found in Mycoplasmopsis synoviae (strain 53) (Mycoplasma synoviae).